A 112-amino-acid polypeptide reads, in one-letter code: Large ribosomal subunit protein mL53 (112 aa).

Belongs to the mitochondrion-specific ribosomal protein mL53 family. Component of the mitochondrial ribosome large subunit (39S) which comprises a 16S rRNA and about 50 distinct proteins.

It is found in the mitochondrion. In Pongo abelii (Sumatran orangutan), this protein is Large ribosomal subunit protein mL53 (MRPL53).